Consider the following 184-residue polypeptide: Small ribosomal subunit protein uS4c (184 aa).

The 62-residue stretch at methionine 82 to asparagine 143 folds into the S4 RNA-binding domain.

It belongs to the universal ribosomal protein uS4 family. In terms of assembly, part of the 30S ribosomal subunit. Contacts protein S5. The interaction surface between S4 and S5 is involved in control of translational fidelity.

The protein localises to the plastid. Its subcellular location is the chloroplast. Functionally, one of the primary rRNA binding proteins, it binds directly to 16S rRNA where it nucleates assembly of the body of the 30S subunit. In terms of biological role, with S5 and S12 plays an important role in translational accuracy. This Patersonia fragilis (Short purple-flag) protein is Small ribosomal subunit protein uS4c (rps4).